A 596-amino-acid chain; its full sequence is uncharacterized protein (596 aa).

An N-terminal signal peptide occupies residues 1–20 (MRYKPLLLALMLVFSTPAVA). Composition is skewed to basic and acidic residues over residues 25-90 (AHNR…KEAT) and 161-184 (VRSDKNGKAVKQDKKYREEKNAKT). Residues 25–184 (AHNRSAEVKK…KYREEKNAKT (160 aa)) are disordered. 2 coiled-coil regions span residues 177–281 (REEK…RFVS) and 318–454 (NREV…TAED).

This sequence belongs to the peptidase M23B family.

This is an uncharacterized protein from Neisseria meningitidis serogroup B (strain ATCC BAA-335 / MC58).